The primary structure comprises 112 residues: uncharacterized protein (112 aa).

The segment at 1-27 (MIASIGDSAEPPLRRTRRAQQQDRPPT) is disordered.

This is an uncharacterized protein from Orgyia pseudotsugata multicapsid polyhedrosis virus (OpMNPV).